A 260-amino-acid chain; its full sequence is 5'-nucleotidase SurE (260 aa).

D8, D9, S39, and N91 together coordinate a divalent metal cation.

It belongs to the SurE nucleotidase family. It depends on a divalent metal cation as a cofactor.

Its subcellular location is the cytoplasm. It carries out the reaction a ribonucleoside 5'-phosphate + H2O = a ribonucleoside + phosphate. In terms of biological role, nucleotidase that shows phosphatase activity on nucleoside 5'-monophosphates. The protein is 5'-nucleotidase SurE of Acidovorax ebreus (strain TPSY) (Diaphorobacter sp. (strain TPSY)).